The sequence spans 255 residues: Protein BEAN1 (255 aa).

A helical transmembrane segment spans residues 37-57; it reads VLVASAVIGVVITLSCITIIV. A compositionally biased stretch (basic residues) spans 69-90; the sequence is QRHHHRHRRHHHHHRHRRRRHR. 2 disordered regions span residues 69–109 and 160–255; these read QRHH…MPYA and DAPP…ERIV. The span at 193–206 shows a compositional bias: polar residues; sequence QRTQGQSRLHTVSM. Low complexity predominate over residues 217 to 226; the sequence is GTGSPSDLLP. Polar residues predominate over residues 234-243; that stretch reads PSNSQGSPIP. The segment covering 244–255 has biased composition (pro residues); it reads TQAPMPSPERIV.

Interacts with NEDD4.

It localises to the membrane. This Mus musculus (Mouse) protein is Protein BEAN1 (Bean1).